Here is a 1381-residue protein sequence, read N- to C-terminus: MKAPTVLAPGILVLLFTLVQKSNGECREALAKSEMNVNMKYQLPNFTAETPIQNVVLHKHHIYLGAVNYIYVLNDKDLQKVAEYKTGPVLEHPDCVPCQNCSSKANLSGSAWRDNINMALLVDTYYDDQLISCGSVNRGTCQRHVFPPHNTADIQSEVRCMYSPQPEEEPSQCPDCVVSALGTKVLLTVKDRFINFFVGNTINSSYLPDHSLHSISVRRLKETQDGFKFLTDQSYIDVLPEFRDSYPIKYVHAFESNHFIYFLTVQRETLDSQTFHTRIIRFCSVDSGLHSYMEMPLECILTEKRRKRSTRQEVFNILQAAYVSKPGAHLAKQIGASPNDDILYGVFAQSKPDSAEPMNRSAVCAFPIKYVNEFFNKIVNKNNVRCLQHFYGPNHEHCFNRTLLRNSSGCEVRSDEYRTEFTTALQRVDLFMGQFNQVLLTSISTFIKGDLTIANLGTSEGRFMQVVVSRSVLPAPHVNFLLDSNPVSLEALVEDPVNQNGYTLVVTGKKITRIPLDGLGCGHFQSCSQCLSAPPFVQCGWCQDKCVQVEECPNGTWTQEICLPTVYEVFPTSAPLEGGTMLTICGWDFGFRRNNKFDLKKTRVLVGNESCTLTLSESTTNTLKCTVGHAMNENFNMSIIISNGRRTVHYNAFSYVDPIITSIFPKYGPKAGGTLLTLTGKYLNSGNSRHISIGGKTCTLKSVSNSILECYTPAQIISTEFPIKLKIDLANREASSFSYREDPIVYEIHPTKSFLSGGSTITGVGKNLNSVSVTRMVINVHEARKNFTVACQHRSNSEIMCCTTPSLQQLNLQLPLKTRAFFVLDGIYSNYFDLIYVHNPVFKPFEKPVMISMGRENVLEIKGNDIDPEAVKGEVLKVGNKSCENIHSRSQAVLCTVPNDLLKLNSVLYIEWKQAVSSYILGKVIVQSDQSFTGVIVGVVAISIILLLLLGLFLWLKKKKQIKDLGSELVRYDARVHTPHLDRLVSARSVSPTTEMVSNESVDYRATFPEDQFPNSSQNGSCRQVQYPLMDLSPILTSGDSDISSPLLQNVVHIDLSALNPELVQEVQHVVIGPSSLIVHFNEVIGRGHFGCVYHGTLLDSDDKKIHCAVKSLNRITDIGEVSQFLTEGIIMKDFSHPNVLSLLGICLRSEGSPLVVLPYMKHGDLRNFIRNETHNPTVKDLIGFGLQVAKGMKYLASKKFVHRDLAARNCMLDEKFTVKVADFGLARDMYDKEYYSVHNKTGAKLPVKWMALESLQTQKFTTKSDVWSFGVLLWELMTRGAPPYPDVNTFDITVYLLQGRRLLQPEYCPDRLYEVMLKCWHPKAEMRPSFSELVSRISAIFSTFIGEHYVHVNATYVNVKCIAPYPSLLSQDDLDGEVDT.

An N-terminal signal peptide occupies residues 1-24 (MKAPTVLAPGILVLLFTLVQKSNG). At 25 to 933 (ECREALAKSE…VIVQSDQSFT (909 aa)) the chain is on the extracellular side. Residues 27 to 516 (REALAKSEMN…TGKKITRIPL (490 aa)) form the Sema domain. N-linked (GlcNAc...) asparagine glycosylation is found at asparagine 45, asparagine 100, and asparagine 106. Disulfide bonds link cysteine 95–cysteine 101, cysteine 98–cysteine 160, cysteine 133–cysteine 141, and cysteine 173–cysteine 176. Residues asparagine 203 and asparagine 359 are each glycosylated (N-linked (GlcNAc...) asparagine). 2 cysteine pairs are disulfide-bonded: cysteine 299/cysteine 364 and cysteine 386/cysteine 398. Asparagine 400 and asparagine 406 each carry an N-linked (GlcNAc...) asparagine glycan. 4 disulfide bridges follow: cysteine 521–cysteine 539, cysteine 527–cysteine 562, cysteine 530–cysteine 546, and cysteine 542–cysteine 552. An N-linked (GlcNAc...) asparagine glycan is attached at asparagine 554. 3 IPT/TIG domains span residues 564–656 (PTVY…FSYV), 658–740 (PIIT…FSYR), and 743–837 (PIVY…LIYV). The O-linked (Man) threonine glycan is linked to threonine 583. N-linked (GlcNAc...) asparagine glycosylation is found at asparagine 608 and asparagine 636. Residues threonine 677 and threonine 762 are each glycosylated (O-linked (Man) threonine). Residues asparagine 786 and asparagine 880 are each glycosylated (N-linked (GlcNAc...) asparagine). Residues 934-956 (GVIVGVVAISIILLLLLGLFLWL) form a helical membrane-spanning segment. Residues 957–1381 (KKKKQIKDLG…QDDLDGEVDT (425 aa)) are Cytoplasmic-facing. Position 967 is a phosphoserine (serine 967). Position 978 is a phosphothreonine (threonine 978). Phosphoserine occurs at positions 991, 998, and 1001. Tyrosine 1004 bears the Phosphotyrosine mark. The Protein kinase domain occupies 1079–1346 (VHFNEVIGRG…RISAIFSTFI (268 aa)). Residues 1085–1093 (IGRGHFGCV) and lysine 1111 each bind ATP. Residue aspartate 1205 is the Proton acceptor of the active site. The tract at residues 1213 to 1381 (LDEKFTVKVA…QDDLDGEVDT (169 aa)) is interaction with RANBP9. Tyrosine 1231 bears the Phosphotyrosine mark. Phosphotyrosine; by autocatalysis occurs at positions 1235 and 1236. Threonine 1290 is subject to Phosphothreonine. The interval 1321-1360 (WHPKAEMRPSFSELVSRISAIFSTFIGEHYVHVNATYVNV) is interaction with MUC20. Tyrosine 1350 and tyrosine 1357 each carry phosphotyrosine; by autocatalysis. Tyrosine 1366 is modified (phosphotyrosine).

Belongs to the protein kinase superfamily. Tyr protein kinase family. As to quaternary structure, heterodimer made of an alpha chain (50 kDa) and a beta chain (145 kDa) which are disulfide linked. Binds PLXNB1. Interacts when phosphorylated with downstream effectors including STAT3, PIK3R1, SRC, PCLG1, GRB2 and GAB1. Interacts with SPSB1, SPSB2 and SPSB4. Interacts with INPP5D/SHIP1. When phosphorylated at Tyr-1357, interacts with INPPL1/SHIP2. Interacts with RANBP9 and RANBP10, as well as SPSB1, SPSB2, SPSB3 and SPSB4. SPSB1 binding occurs in the presence and in the absence of HGF, however HGF treatment has a positive effect on this interaction. Interacts with MUC20; prevents interaction with GRB2 and suppresses hepatocyte growth factor-induced cell proliferation. Interacts with GRB10. Interacts with PTPN1 and PTPN2. Interacts with HSP90AA1 and HSP90AB1; the interaction suppresses MET kinase activity. Interacts with tensin TNS3. Interacts (when phosphorylated) with tensin TNS4 (via SH2 domain); the interaction increases MET protein stability by inhibiting MET endocytosis and subsequent lysosomal degradation. Post-translationally, autophosphorylated in response to ligand binding on Tyr-1235 and Tyr-1236 in the kinase domain leading to further phosphorylation of Tyr-1350 and Tyr-1357 in the C-terminal multifunctional docking site. Dephosphorylated by PTPRJ at Tyr-1350 and Tyr-1366. Dephosphorylated by PTPN1 and PTPN2. Ubiquitinated. Ubiquitination by CBL regulates the receptor stability and activity through proteasomal degradation. In terms of processing, O-mannosylation of IPT/TIG domains by TMEM260 is required for protein maturation. O-mannosylated residues are composed of single mannose glycans that are not elongated or modified.

Its subcellular location is the membrane. The enzyme catalyses L-tyrosyl-[protein] + ATP = O-phospho-L-tyrosyl-[protein] + ADP + H(+). With respect to regulation, in its inactive state, the C-terminal tail interacts with the catalytic domain and inhibits the kinase activity. Upon ligand binding, the C-terminal tail is displaced and becomes phosphorylated, thus increasing the kinase activity. Receptor tyrosine kinase that transduces signals from the extracellular matrix into the cytoplasm by binding to hepatocyte growth factor/HGF ligand. Regulates many physiological processes including proliferation, scattering, morphogenesis and survival. Ligand binding at the cell surface induces autophosphorylation of MET on its intracellular domain that provides docking sites for downstream signaling molecules. Following activation by ligand, interacts with the PI3-kinase subunit PIK3R1, PLCG1, SRC, GRB2, STAT3 or the adapter GAB1. Recruitment of these downstream effectors by MET leads to the activation of several signaling cascades including the RAS-ERK, PI3 kinase-AKT, or PLCgamma-PKC. The RAS-ERK activation is associated with the morphogenetic effects while PI3K/AKT coordinates prosurvival effects. During embryonic development, MET signaling plays a role in gastrulation, development and migration of muscles and neuronal precursors, angiogenesis and kidney formation. In adults, participates in wound healing as well as organ regeneration and tissue remodeling. Also promotes differentiation and proliferation of hematopoietic cells. The chain is Hepatocyte growth factor receptor (MET) from Dasypus novemcinctus (Nine-banded armadillo).